The primary structure comprises 218 residues: Small ribosomal subunit protein uS7 (218 aa).

Belongs to the universal ribosomal protein uS7 family. As to quaternary structure, part of the 30S ribosomal subunit.

Functionally, one of the primary rRNA binding proteins, it binds directly to 16S rRNA where it nucleates assembly of the head domain of the 30S subunit. Is located at the subunit interface close to the decoding center. The chain is Small ribosomal subunit protein uS7 (rps7) from Pyrococcus horikoshii (strain ATCC 700860 / DSM 12428 / JCM 9974 / NBRC 100139 / OT-3).